Reading from the N-terminus, the 289-residue chain is Bis(5'-nucleosyl)-tetraphosphatase, symmetrical (289 aa).

It belongs to the Ap4A hydrolase family.

It carries out the reaction P(1),P(4)-bis(5'-adenosyl) tetraphosphate + H2O = 2 ADP + 2 H(+). Its function is as follows. Hydrolyzes diadenosine 5',5'''-P1,P4-tetraphosphate to yield ADP. The chain is Bis(5'-nucleosyl)-tetraphosphatase, symmetrical from Yersinia pestis bv. Antiqua (strain Antiqua).